Consider the following 346-residue polypeptide: tRNA N6-adenosine threonylcarbamoyltransferase (346 aa).

The Fe cation site is built by H111 and H115. Substrate contacts are provided by residues 134–138 (LVSGG), D167, G180, and N279. D307 is a binding site for Fe cation.

This sequence belongs to the KAE1 / TsaD family. Fe(2+) is required as a cofactor.

The protein localises to the cytoplasm. The enzyme catalyses L-threonylcarbamoyladenylate + adenosine(37) in tRNA = N(6)-L-threonylcarbamoyladenosine(37) in tRNA + AMP + H(+). Required for the formation of a threonylcarbamoyl group on adenosine at position 37 (t(6)A37) in tRNAs that read codons beginning with adenine. Is involved in the transfer of the threonylcarbamoyl moiety of threonylcarbamoyl-AMP (TC-AMP) to the N6 group of A37, together with TsaE and TsaB. TsaD likely plays a direct catalytic role in this reaction. In Burkholderia thailandensis (strain ATCC 700388 / DSM 13276 / CCUG 48851 / CIP 106301 / E264), this protein is tRNA N6-adenosine threonylcarbamoyltransferase.